Consider the following 815-residue polypeptide: Cell division control protein 48 homolog D (815 aa).

An N-acetylalanine modification is found at A2. S42 carries the phosphoserine modification. Residues 249–256 (GPPGSGKT) and 522–529 (GPPGCGKT) contribute to the ATP site. The residue at position 720 (S720) is a Phosphoserine. Residues 772–815 (GSEFRFPDAPTGTTGAFPGAAATVGGVDPFATSGGAADDDDLYS) form a disordered region. Positions 780–798 (APTGTTGAFPGAAATVGGV) are enriched in low complexity.

This sequence belongs to the AAA ATPase family.

It localises to the nucleus. Its subcellular location is the cytoplasm. It is found in the cytoskeleton. The protein localises to the phragmoplast. Functionally, probably functions in cell division and growth processes. Interacts with certain SNAREs as part of specialized membrane fusion events where vesicles from the same organelle fuse (homotypic fusion). In Arabidopsis thaliana (Mouse-ear cress), this protein is Cell division control protein 48 homolog D (CDC48D).